Here is a 425-residue protein sequence, read N- to C-terminus: Enolase (425 aa).

Gln170 provides a ligand contact to (2R)-2-phosphoglycerate. Residue Glu214 is the Proton donor of the active site. The Mg(2+) site is built by Asp250, Glu291, and Asp317. (2R)-2-phosphoglycerate contacts are provided by Lys342, Arg371, Ser372, and Lys393. Lys342 (proton acceptor) is an active-site residue.

It belongs to the enolase family. Requires Mg(2+) as cofactor.

The protein resides in the cytoplasm. It localises to the secreted. Its subcellular location is the cell surface. The catalysed reaction is (2R)-2-phosphoglycerate = phosphoenolpyruvate + H2O. It participates in carbohydrate degradation; glycolysis; pyruvate from D-glyceraldehyde 3-phosphate: step 4/5. Catalyzes the reversible conversion of 2-phosphoglycerate (2-PG) into phosphoenolpyruvate (PEP). It is essential for the degradation of carbohydrates via glycolysis. In Methanococcoides burtonii (strain DSM 6242 / NBRC 107633 / OCM 468 / ACE-M), this protein is Enolase.